The chain runs to 245 residues: 1-(5-phosphoribosyl)-5-[(5-phosphoribosylamino)methylideneamino] imidazole-4-carboxamide isomerase (245 aa).

Asp8 serves as the catalytic Proton acceptor. Asp129 serves as the catalytic Proton donor.

The protein belongs to the HisA/HisF family.

Its subcellular location is the cytoplasm. It carries out the reaction 1-(5-phospho-beta-D-ribosyl)-5-[(5-phospho-beta-D-ribosylamino)methylideneamino]imidazole-4-carboxamide = 5-[(5-phospho-1-deoxy-D-ribulos-1-ylimino)methylamino]-1-(5-phospho-beta-D-ribosyl)imidazole-4-carboxamide. It participates in amino-acid biosynthesis; L-histidine biosynthesis; L-histidine from 5-phospho-alpha-D-ribose 1-diphosphate: step 4/9. This Trichlorobacter lovleyi (strain ATCC BAA-1151 / DSM 17278 / SZ) (Geobacter lovleyi) protein is 1-(5-phosphoribosyl)-5-[(5-phosphoribosylamino)methylideneamino] imidazole-4-carboxamide isomerase.